Consider the following 373-residue polypeptide: Chaperone protein DnaJ (373 aa).

Residues 4–69 (DYYETLSVER…SKRRIYDTYG (66 aa)) form the J domain. Residues 131-209 (GVSKEVKLSR…CHGEGLVKKT (79 aa)) form a CR-type zinc finger. Zn(2+) is bound by residues cysteine 144, cysteine 147, cysteine 161, cysteine 164, cysteine 183, cysteine 186, cysteine 197, and cysteine 200. 4 CXXCXGXG motif repeats span residues 144-151 (CWTCEGTG), 161-168 (CPTCNGRG), 183-190 (CPECEGEG), and 197-204 (CNDCHGEG).

The protein belongs to the DnaJ family. Homodimer. It depends on Zn(2+) as a cofactor.

Its subcellular location is the cytoplasm. Its function is as follows. Participates actively in the response to hyperosmotic and heat shock by preventing the aggregation of stress-denatured proteins and by disaggregating proteins, also in an autonomous, DnaK-independent fashion. Unfolded proteins bind initially to DnaJ; upon interaction with the DnaJ-bound protein, DnaK hydrolyzes its bound ATP, resulting in the formation of a stable complex. GrpE releases ADP from DnaK; ATP binding to DnaK triggers the release of the substrate protein, thus completing the reaction cycle. Several rounds of ATP-dependent interactions between DnaJ, DnaK and GrpE are required for fully efficient folding. Also involved, together with DnaK and GrpE, in the DNA replication of plasmids through activation of initiation proteins. The sequence is that of Chaperone protein DnaJ from Desulfotalea psychrophila (strain LSv54 / DSM 12343).